The following is a 420-amino-acid chain: ATP-dependent Clp protease ATP-binding subunit ClpX (420 aa).

Residues 3-57 (KKTPGTNGKQKLFCSFCGKEQDAVKRLVAGPGVYICDECISLCNEIIAEDHEHSH) enclose the ClpX-type ZB domain. The Zn(2+) site is built by C16, C19, C38, and C41. 122-129 (PTGSGKTL) serves as a coordination point for ATP.

This sequence belongs to the ClpX chaperone family. As to quaternary structure, component of the ClpX-ClpP complex. Forms a hexameric ring that, in the presence of ATP, binds to fourteen ClpP subunits assembled into a disk-like structure with a central cavity, resembling the structure of eukaryotic proteasomes.

ATP-dependent specificity component of the Clp protease. It directs the protease to specific substrates. Can perform chaperone functions in the absence of ClpP. In Leptospira borgpetersenii serovar Hardjo-bovis (strain L550), this protein is ATP-dependent Clp protease ATP-binding subunit ClpX.